The sequence spans 248 residues: Probable transcriptional regulatory protein Msil_2305 (248 aa).

It belongs to the TACO1 family.

The protein resides in the cytoplasm. This Methylocella silvestris (strain DSM 15510 / CIP 108128 / LMG 27833 / NCIMB 13906 / BL2) protein is Probable transcriptional regulatory protein Msil_2305.